The primary structure comprises 290 residues: Shikimate dehydrogenase (NADP(+)) (290 aa).

Residues 19-21 (SLS) and Ser-65 contribute to the shikimate site. Lys-69 acts as the Proton acceptor in catalysis. Shikimate contacts are provided by Asn-90 and Asp-105. NADP(+) is bound by residues 129 to 133 (GAGGA) and Leu-231. Tyr-233 lines the shikimate pocket. Gly-254 is a binding site for NADP(+).

The protein belongs to the shikimate dehydrogenase family. As to quaternary structure, homodimer.

The enzyme catalyses shikimate + NADP(+) = 3-dehydroshikimate + NADPH + H(+). It functions in the pathway metabolic intermediate biosynthesis; chorismate biosynthesis; chorismate from D-erythrose 4-phosphate and phosphoenolpyruvate: step 4/7. Its function is as follows. Involved in the biosynthesis of the chorismate, which leads to the biosynthesis of aromatic amino acids. Catalyzes the reversible NADPH linked reduction of 3-dehydroshikimate (DHSA) to yield shikimate (SA). The protein is Shikimate dehydrogenase (NADP(+)) of Latilactobacillus sakei subsp. sakei (strain 23K) (Lactobacillus sakei subsp. sakei).